The chain runs to 248 residues: DNA repair protein RecO (248 aa).

This sequence belongs to the RecO family.

Involved in DNA repair and RecF pathway recombination. The chain is DNA repair protein RecO from Bacillus mycoides (strain KBAB4) (Bacillus weihenstephanensis).